A 360-amino-acid polypeptide reads, in one-letter code: uncharacterized protein (360 aa).

Positions 22-32 (EEDVEPNEEAE) are enriched in acidic residues. The tract at residues 22–55 (EEDVEPNEEAEGPGGVHKKRRGARKKNRRQRMEG) is disordered. The segment covering 37 to 50 (VHKKRRGARKKNRR) has biased composition (basic residues).

This is an uncharacterized protein from Caenorhabditis elegans.